Reading from the N-terminus, the 2641-residue chain is Inverse autotransporter adhesin YeeJ (2641 aa).

Residues 1 to 25 (MGIKLRRLTAGICLITQLVFPMAAA) form the signal peptide. The 49-residue stretch at 50–98 (VPYTLGALESAQSVAERFGISVAELRKLNQFRTFARGFDNVRQGDELDV) folds into the LysM domain. The inverse autotransporter stretch occupies residues 125–400 (TSQQIGSLLA…SRFDLVDRNN (276 aa)). The invasin 3 domain stretch occupies residues 513–605 (QKDSSVSLSS…GVDAAKAPAV (93 aa)). 17 Big-1 domains span residues 617-711 (HSSI…AGFI), 721-815 (IATL…VSFV), 822-913 (QVDL…VIFI), 920-1017 (ALTL…MTFV), 1024-1116 (VVVL…VNIA), 1123-1220 (QVTL…VTFV), 1227-1319 (VVVL…VNIA), 1326-1423 (QVTL…VTFV), 1430-1523 (LVVL…VHFI), 1531-1633 (IIEL…SINV), 1641-1734 (HLTL…VTYV), 1741-1837 (EISL…VNFI), 1844-1941 (QVNL…VTLI), 1948-2032 (KLAS…PTEV), 2048-2141 (ITSL…VIDQ), 2142-2235 (KLTL…IVKV), and 2244-2336 (VASF…ITLV). The C-type lectin domain stretch occupies residues 2538–2641 (KSWWVNAGDA…FAYATCYKNL (104 aa)).

The protein belongs to the intimin/invasin family.

Its subcellular location is the cell outer membrane. In terms of biological role, a probable inverse autotransporter, it may be involved in biofilm formation and cell adhesion. May bind peptidoglycan via its LysM domain. The sequence is that of Inverse autotransporter adhesin YeeJ (yeeJ) from Escherichia coli O157:H7.